Here is a 237-residue protein sequence, read N- to C-terminus: NADPH-dependent FMN reductase ArsH (237 aa).

Residues 39 to 46 and 102 to 107 each bind FMN; these read SNRECSYS and SPERHG.

Belongs to the ArsH family. In terms of assembly, homotetramer. Requires FMN as cofactor.

Has NADPH-dependent FMN reductase activity and high NADPH-dependent ferric reductase activity with highest activity for Fe(3+) as substrate. No activity with NADH, iron trichloride, Cu(2+) or Ag(+). May be involved in cytosolic ferric iron assimilation as an NADPH-dependent ferric reductase in vivo. This is NADPH-dependent FMN reductase ArsH from Acidithiobacillus ferrooxidans (strain ATCC 23270 / DSM 14882 / CIP 104768 / NCIMB 8455) (Ferrobacillus ferrooxidans (strain ATCC 23270)).